The sequence spans 551 residues: Calcium-dependent protein kinase 13 (551 aa).

Residue Gly2 is the site of N-myristoyl glycine attachment. A disordered region spans residues 15–78 (SFKQTASQRH…APADLGSVLG (64 aa)). The Protein kinase domain maps to 88 to 346 (YAMGRKLGQG…AHEVLCHPWI (259 aa)). ATP-binding positions include 94–102 (LGQGQFGTT) and Lys117. Residue Asp212 is the Proton acceptor of the active site. An autoinhibitory domain region spans residues 352 to 382 (APDRPLDPAVLSRIKQFSAMNKLKKMALRVI). EF-hand domains are found at residues 389 to 424 (EEIA…YGST), 425 to 460 (LKDT…LNKL), 461 to 496 (EREE…HNMP), and 497 to 530 (DAFL…GNMG). 19 residues coordinate Ca(2+): Asp402, Asp404, Ser406, Glu413, Asp438, Asp440, Ser442, Thr444, Glu449, Asp474, Asp476, Ser478, Tyr480, Glu485, Asp508, Asp510, Asp512, Arg514, and Glu519.

The protein belongs to the protein kinase superfamily. Ser/Thr protein kinase family. CDPK subfamily. As to expression, expressed in vascular tissues of crowns and roots, vascular bundles and central cylinder. Expressed in roots, leaf blades, spikelets and developing seeds.

Its subcellular location is the membrane. It carries out the reaction L-seryl-[protein] + ATP = O-phospho-L-seryl-[protein] + ADP + H(+). The enzyme catalyses L-threonyl-[protein] + ATP = O-phospho-L-threonyl-[protein] + ADP + H(+). Its activity is regulated as follows. Activated by calcium. Autophosphorylation may play an important role in the regulation of the kinase activity. In terms of biological role, may play a role in signal transduction pathways that involve calcium as a second messenger. May function in signal transduction pathways that positively regulate responses to cold, salt and drought stresses. The protein is Calcium-dependent protein kinase 13 of Oryza sativa subsp. japonica (Rice).